Reading from the N-terminus, the 274-residue chain is 2,3,4,5-tetrahydropyridine-2,6-dicarboxylate N-succinyltransferase (274 aa).

The protein belongs to the transferase hexapeptide repeat family.

Its subcellular location is the cytoplasm. The catalysed reaction is (S)-2,3,4,5-tetrahydrodipicolinate + succinyl-CoA + H2O = (S)-2-succinylamino-6-oxoheptanedioate + CoA. Its pathway is amino-acid biosynthesis; L-lysine biosynthesis via DAP pathway; LL-2,6-diaminopimelate from (S)-tetrahydrodipicolinate (succinylase route): step 1/3. This chain is 2,3,4,5-tetrahydropyridine-2,6-dicarboxylate N-succinyltransferase, found in Leptothrix cholodnii (strain ATCC 51168 / LMG 8142 / SP-6) (Leptothrix discophora (strain SP-6)).